Reading from the N-terminus, the 277-residue chain is Putative pyruvate, phosphate dikinase regulatory protein (277 aa).

An ADP-binding site is contributed by 156 to 163; that stretch reads GVSRTSKT.

It belongs to the pyruvate, phosphate/water dikinase regulatory protein family. PDRP subfamily.

It carries out the reaction N(tele)-phospho-L-histidyl/L-threonyl-[pyruvate, phosphate dikinase] + ADP = N(tele)-phospho-L-histidyl/O-phospho-L-threonyl-[pyruvate, phosphate dikinase] + AMP + H(+). It catalyses the reaction N(tele)-phospho-L-histidyl/O-phospho-L-threonyl-[pyruvate, phosphate dikinase] + phosphate + H(+) = N(tele)-phospho-L-histidyl/L-threonyl-[pyruvate, phosphate dikinase] + diphosphate. Bifunctional serine/threonine kinase and phosphorylase involved in the regulation of the pyruvate, phosphate dikinase (PPDK) by catalyzing its phosphorylation/dephosphorylation. This chain is Putative pyruvate, phosphate dikinase regulatory protein, found in Carboxydothermus hydrogenoformans (strain ATCC BAA-161 / DSM 6008 / Z-2901).